The primary structure comprises 782 residues: MFPPSGSTGLIPPSHFQARPLSTLPRMAPTWLSDIPLVQPPGHQDVSERRLDTQRPQVTMWERDVSSDRQEPGRRGRSWGLEGSQALSQQAEVIVRQLQELRRLEEEVRLLRETSLQQKMRLEAQAMELEALARAEKAGRAEAEGLRAALAGAEVVRKNLEEGSQRELEEVQRLHQEQLSSLTQAHEEALSSLTSKAEGLEKSLSSLETRRAGEAKELAEAQREAELLRKQLSKTQEDLEAQVTLVENLRKYVGEQVPSEVHSQTWELERQKLLETMQHLQEDRDSLHATAELLQVRVQSLTHILALQEEELTRKVQPSDSLEPEFTRKCQSLLNRWREKVFALMVQLKAQELEHSDSVKQLKGQVASLQEKVTSQSQEQAILQRSLQDKAAEVEVERMGAKGLQLELSRAQEARRRWQQQTASAEEQLRLVVNAVSSSQIWLETTMAKVEGAAAQLPSLNNRLSYAVRKVHTIRGLIARKLALAQLRQESCPLPPPVTDVSLELQQLREERNRLDAELQLSARLIQQEVGRAREQGEAERQQLSKVAQQLEQELQQTQESLASLGLQLEVARQGQQESTEEAASLRQELTQQQELYGQALQEKVAEVETRLREQLSDTERRLNEARREHAKAVVSLRQIQRRAAQEKERSQELRRLQEEARKEEGQRLARRLQELERDKNLMLATLQQEGLLSRYKQQRLLTVLPSLLDKKKSVVSSPRPPECSASAPVAAAVPTRESIKGSLSVLLDDLQDLSEAISKEEAVCQGDNLDRCSSSNPQMSS.

Basic and acidic residues-rich tracts occupy residues 62-74 (ERDV…EPGR) and 208-218 (ETRRAGEAKEL). 2 disordered regions span residues 62–82 (ERDV…WGLE) and 177–218 (EQLS…AKEL). 3 coiled-coil regions span residues 111–303 (LRET…SLTH), 344–437 (LMVQ…NAVS), and 498–691 (VTDV…QQEG).

In terms of tissue distribution, found in all tissues tested, abundantly expressed in heart, liver, skeletal muscle, kidney and pancreas, and to a lesser extent in lung and placenta. Overexpressed in keratinocytes of psoriatic lesions.

Its subcellular location is the cytoplasm. It is found in the nucleus. Functionally, may be a regulator of keratinocyte proliferation or differentiation. This chain is Coiled-coil alpha-helical rod protein 1 (CCHCR1), found in Homo sapiens (Human).